The primary structure comprises 540 residues: MEARMKKYSREVSPERAKVWTEKSPKYHQKIKKVQIVYYLSKNRQLEHPHFMEVLISSPNGLYLRDVIERLNVLRGRGMASMYSWSSKRSYRNGFVWHDLSEDDLILPANGNEYVLKGSELFDESNSDHFSPIVNLATQNMKQIVVEPPSSRSMDDSSSSSSMNNGKGTNKHSHEDDELSPPALRSVSSSGVSPDSRDAKNSSSWCLAEYKVYKSEGLADASTQTDETVSGRSKTPIETFSRGVSTDEDVSSEPETSENNLVSEASCAGKERESAEISRNSVSPPFSNSASSLGGKTDTLESLIRADVSKMNSFRILEQEDVRMPAIPRLRASNMLMQLISCGSISVKDNNFGLVPTYKPKFGHSKFPSPFFSSSFMMGDLDRLSETPSLMGLRMEEKEYFSGSLVETKLQKKDAADSNASLKRSSSYNGDRASNQMGVAENGDSKPDSSKNNPSSRKASSILGKQQPLVSEKRRDSSEDTTKNIPCTTKTHDACSKRITESLRKPDSFREDEERVIKIDERLASGARVRIESKVPSEEP.

Positions 32 to 123 are DIX-like oligomerization domain; sequence KKVQIVYYLS…YVLKGSELFD (92 aa). 2 disordered regions span residues 147–201 and 219–294; these read EPPS…DAKN and ADAS…SSLG. 2 stretches are compositionally biased toward low complexity: residues 150–163 and 185–194; these read SSRS…SSSM and RSVSSSGVSP. Polar residues predominate over residues 221–244; that stretch reads ASTQTDETVSGRSKTPIETFSRGV. The segment covering 246 to 256 has biased composition (acidic residues); the sequence is TDEDVSSEPET. The span at 280–292 shows a compositional bias: low complexity; it reads NSVSPPFSNSASS. An Association to cell membranes motif is present at residues 342 to 343; sequence CG. The tract at residues 412 to 492 is disordered; that stretch reads KKDAADSNAS…KNIPCTTKTH (81 aa). The segment covering 418 to 437 has biased composition (polar residues); it reads SNASLKRSSSYNGDRASNQM. A compositionally biased stretch (basic and acidic residues) spans 471 to 482; sequence SEKRRDSSEDTT.

Belongs to the SOSEKI family. Homodimer. Forms long polymer filaments with other SOKs proteins polymers (e.g. SOK1, SOK2, SOK3 and SOK4) crucial for polar localization and biological activity. Binds to ANGUSTIFOLIA (AN). Expressed during embryogenesis and in roots.

It is found in the cell membrane. Its function is as follows. SOSEKI proteins (SOK1-5) locally interpret global polarity cues and can influence cell division orientation to coordinate cell polarization relative to body axes, probably by guiding ANGUSTIFOLIA (AN) polarized localization. The polypeptide is Protein SOSEKI 3 (Arabidopsis thaliana (Mouse-ear cress)).